A 482-amino-acid polypeptide reads, in one-letter code: Glutamyl-tRNA(Gln) amidotransferase subunit A (482 aa).

Residues lysine 74 and serine 149 each act as charge relay system in the active site. The active-site Acyl-ester intermediate is the serine 173.

This sequence belongs to the amidase family. GatA subfamily. Heterotrimer of A, B and C subunits.

The catalysed reaction is L-glutamyl-tRNA(Gln) + L-glutamine + ATP + H2O = L-glutaminyl-tRNA(Gln) + L-glutamate + ADP + phosphate + H(+). Functionally, allows the formation of correctly charged Gln-tRNA(Gln) through the transamidation of misacylated Glu-tRNA(Gln) in organisms which lack glutaminyl-tRNA synthetase. The reaction takes place in the presence of glutamine and ATP through an activated gamma-phospho-Glu-tRNA(Gln). This chain is Glutamyl-tRNA(Gln) amidotransferase subunit A, found in Prochlorococcus marinus (strain MIT 9215).